A 68-amino-acid chain; its full sequence is Lantibiotic mersacidin (68 aa).

The tract at residues M1–F28 is disordered. Residues M1–A48 constitute a propeptide that is removed on maturation. Positions C49 to T50 form a cross-link, beta-methyllanthionine (Cys-Thr). 2 consecutive cross-links (beta-methyllanthionine (Thr-Cys)) follow at residues T52 to C60 and T61 to C66. The S-(2-aminovinyl)-3-methyl-D-cysteine (Thr-Cys) cross-link spans T63–C68. Residue S64 is modified to 2,3-didehydroalanine (Ser).

This sequence belongs to the type B lantibiotic family. Maturation of lantibiotics involves the enzymatic conversion of Thr, and Ser into dehydrated AA and the formation of thioether bonds with cysteine. The carboxy-terminal beta-methyllanthionine undergoes decarboxylation. This is followed by membrane translocation and cleavage of the modified precursor.

Its function is as follows. Kills a number of Gram-positive bacteria. Acts at the level of cell wall biosynthesis by interfering with bacterial peptidoglycan biosynthesis. Specifically inhibits the conversion of the lipid II intermediate into polymeric nascent glycan strands by transglycosylation. May interact with the peptidoglycan precursor rather than with the enzyme. The sequence is that of Lantibiotic mersacidin (mrsA) from Bacillus sp. (strain HIL-Y85/54728).